Consider the following 133-residue polypeptide: Interleukin-4 (133 aa).

A signal peptide spans M1–G24. Disulfide bonds link C27/C133, C48/C85, and C70/C105. 3 N-linked (GlcNAc...) asparagine glycosylation sites follow: N62, N96, and N102.

It belongs to the IL-4/IL-13 family.

It localises to the secreted. Functionally, participates in at least several B-cell activation processes as well as of other cell types. It is a costimulator of DNA-synthesis. It induces the expression of class II MHC molecules on resting B-cells. It enhances both secretion and cell surface expression of IgE and IgG1. It also regulates the expression of the low affinity Fc receptor for IgE (CD23) on both lymphocytes and monocytes. Positively regulates IL31RA expression in macrophages. Stimulates autophagy in dendritic cells by interfering with mTORC1 signaling and through the induction of RUFY4. The chain is Interleukin-4 (IL4) from Tursiops truncatus (Atlantic bottle-nosed dolphin).